The chain runs to 20 residues: Pregnancy-associated glycoprotein 75 (20 aa).

It belongs to the peptidase A1 family. Post-translationally, N-glycosylated. Expressed in chorionic epithelium (trophectoderm).

The protein resides in the secreted. This Bubalus bubalis (Domestic water buffalo) protein is Pregnancy-associated glycoprotein 75.